Here is a 79-residue protein sequence, read N- to C-terminus: MSEILPYGEDKMGRFGADPEGSDLSFSCRLQDTNSFFAGNQAKRPPKLGQIGRAKRVVIEDDRIDDVLKGMGEKPPSGV.

The segment at 1-21 (MSEILPYGEDKMGRFGADPEG) is disordered. Residues 43 to 69 (KRPPKLGQIGRAKRVVIEDDRIDDVLK) form an inhibitory domain region.

It belongs to the CAMK2N family. In terms of assembly, interacts with CAMK2A and CAMK2B in the presence of Ca(2+)/calmodulin or after autophosphorylation.

It is found in the nucleus. Its subcellular location is the cytoplasm. It localises to the cytosol. The protein localises to the synapse. Functionally, potent and specific cellular inhibitor of CaM-kinase II (CAMK2). Traps Ca(2+)/calmodulin on CAMK2. This Mus musculus (Mouse) protein is Calcium/calmodulin-dependent protein kinase II inhibitor 2 (Camk2n2).